The chain runs to 174 residues: ATP-dependent protease subunit HslV (174 aa).

Residue threonine 2 is part of the active site. 3 residues coordinate Na(+): glycine 157, cysteine 160, and threonine 163.

It belongs to the peptidase T1B family. HslV subfamily. A double ring-shaped homohexamer of HslV is capped on each side by a ring-shaped HslU homohexamer. The assembly of the HslU/HslV complex is dependent on binding of ATP.

It is found in the cytoplasm. The enzyme catalyses ATP-dependent cleavage of peptide bonds with broad specificity.. With respect to regulation, allosterically activated by HslU binding. Functionally, protease subunit of a proteasome-like degradation complex believed to be a general protein degrading machinery. The polypeptide is ATP-dependent protease subunit HslV (Shewanella woodyi (strain ATCC 51908 / MS32)).